The primary structure comprises 392 residues: Potassium/proton antiporter CemA (392 aa).

A run of 4 helical transmembrane segments spans residues 174–194 (FLAS…VWWL), 269–289 (SLAN…MLSL), 316–336 (FLIL…WEVI), and 352–372 (FIFM…KYWI).

This sequence belongs to the CemA family.

Its subcellular location is the plastid. The protein localises to the chloroplast inner membrane. It catalyses the reaction K(+)(in) + H(+)(out) = K(+)(out) + H(+)(in). Contributes to K(+)/H(+) antiport activity by supporting proton efflux to control proton extrusion and homeostasis in chloroplasts in a light-dependent manner to modulate photosynthesis. Prevents excessive induction of non-photochemical quenching (NPQ) under continuous-light conditions. Indirectly promotes efficient inorganic carbon uptake into chloroplasts. This is Potassium/proton antiporter CemA from Nephroselmis olivacea (Green alga).